We begin with the raw amino-acid sequence, 312 residues long: Methionyl-tRNA formyltransferase (312 aa).

Residue 110–113 coordinates (6S)-5,6,7,8-tetrahydrofolate; the sequence is SLLP.

This sequence belongs to the Fmt family.

The enzyme catalyses L-methionyl-tRNA(fMet) + (6R)-10-formyltetrahydrofolate = N-formyl-L-methionyl-tRNA(fMet) + (6S)-5,6,7,8-tetrahydrofolate + H(+). In terms of biological role, attaches a formyl group to the free amino group of methionyl-tRNA(fMet). The formyl group appears to play a dual role in the initiator identity of N-formylmethionyl-tRNA by promoting its recognition by IF2 and preventing the misappropriation of this tRNA by the elongation apparatus. This Mycobacterium marinum (strain ATCC BAA-535 / M) protein is Methionyl-tRNA formyltransferase.